The sequence spans 588 residues: Sulfite reductase [NADPH] hemoprotein beta-component (588 aa).

[4Fe-4S] cluster-binding residues include Cys-443, Cys-449, Cys-488, and Cys-492. Position 492 (Cys-492) interacts with siroheme.

It belongs to the nitrite and sulfite reductase 4Fe-4S domain family. Alpha(8)-beta(8). The alpha component is a flavoprotein, the beta component is a hemoprotein. It depends on siroheme as a cofactor. [4Fe-4S] cluster serves as cofactor.

The enzyme catalyses hydrogen sulfide + 3 NADP(+) + 3 H2O = sulfite + 3 NADPH + 4 H(+). It participates in sulfur metabolism; hydrogen sulfide biosynthesis; hydrogen sulfide from sulfite (NADPH route): step 1/1. Component of the sulfite reductase complex that catalyzes the 6-electron reduction of sulfite to sulfide. This is one of several activities required for the biosynthesis of L-cysteine from sulfate. The protein is Sulfite reductase [NADPH] hemoprotein beta-component of Actinobacillus succinogenes (strain ATCC 55618 / DSM 22257 / CCUG 43843 / 130Z).